Reading from the N-terminus, the 969-residue chain is Surface protein P113 (969 aa).

Residues 1 to 22 (MKIPFFILHILLLQFLLCLIRC) form the signal peptide. A glycan (N-linked (GlcNAc...) asparagine) is linked at Asn207. Residues 223–328 (IGDESTDSSS…TDTLVNNKEN (106 aa)) are disordered. Polar residues predominate over residues 229–241 (DSSSMEIQDSTSN). A glycan (N-linked (GlcNAc...) asparagine) is linked at Asn268. Basic and acidic residues predominate over residues 300 to 311 (KNEDNKDLEHGS). The segment covering 312–325 (SNDVNNNTDTLVNN) has biased composition (low complexity). N-linked (GlcNAc...) asparagine glycans are attached at residues Asn317, Asn360, Asn661, and Asn697. Residues 688-705 (SSNFNIFDSNNTDQNNEQ) are compositionally biased toward polar residues. The tract at residues 688–947 (SSNFNIFDSN…NETNKTDNGS (260 aa)) is disordered. Over residues 713–727 (QLLNNNNDDVLSESN) the composition is skewed to low complexity. Residues 728–749 (NENKEKTSDDATHKETQEKSDQ) show a composition bias toward basic and acidic residues. The N-linked (GlcNAc...) asparagine glycan is linked to Asn779. The span at 798 to 811 (EGTEELQQNDEDAE) shows a compositional bias: acidic residues. A compositionally biased stretch (basic and acidic residues) spans 812 to 822 (SLTKENSKSEE). Acidic residues predominate over residues 823-841 (QENEDSTDAEAIDKEEVET). A compositionally biased stretch (basic and acidic residues) spans 842 to 854 (EEKGKDEQKKDEQ). Acidic residues predominate over residues 855–864 (KEQDEEEDGE). The N-linked (GlcNAc...) asparagine glycan is linked to Asn876. Over residues 883-896 (EENKNEVKGEEHLQ) the composition is skewed to basic and acidic residues. Residues 897–907 (GSEQSIEASES) are compositionally biased toward low complexity. The span at 908-917 (SQKDETKETE) shows a compositional bias: basic and acidic residues. The segment covering 918–936 (DKEEYVNANDDESSEEDTT) has biased composition (acidic residues). Positions 937-947 (PNETNKTDNGS) are enriched in polar residues. N-linked (GlcNAc...) asparagine glycans are attached at residues Asn938, Asn941, and Asn945. Asn945 is lipidated: GPI-anchor amidated asparagine. Residues 946-969 (GSSFFFAMSNALLVILLLLFIEFL) constitute a propeptide, removed in mature form.

As to quaternary structure, forms a complex composed of RH5, P113 and human BSG/basigin; the complex bridges the merozoite and host erythrocyte membranes. Within the complex, interacts with RH5 (via N-terminus); the interaction tethers RH5 to the merozoite membrane.

Its subcellular location is the cell membrane. Functionally, membrane receptor which tethers secreted RH5 to the merozoite membrane during merozoite invasion of host erythocytes. This chain is Surface protein P113, found in Plasmodium falciparum (isolate 3D7).